Here is a 511-residue protein sequence, read N- to C-terminus: Potassium voltage-gated channel subfamily A member 10 (511 aa).

The disordered stretch occupies residues Ile22 to Lys50. Residues Val218–Leu238 traverse the membrane as a helical segment. The N-linked (GlcNAc...) asparagine glycan is linked to Asn256. A helical transmembrane segment spans residues Phe271–Val292. Cys293 carries the S-palmitoyl cysteine lipid modification. Residues Ile303 to Leu323 form a helical membrane-spanning segment. The N-linked (GlcNAc...) asparagine glycan is linked to Asn334. The helical; Voltage-sensor transmembrane segment at Ile339–Ser358 threads the bilayer. A helical membrane pass occupies residues Leu375 to Phe395. The Selectivity filter motif lies at Thr421–Asp426. Residues Ile436–Ile456 traverse the membrane as a helical segment. Residues Ser489–Lys511 are disordered. The N-linked (GlcNAc...) asparagine glycan is linked to Asn498.

This sequence belongs to the potassium channel family. A (Shaker) (TC 1.A.1.2) subfamily. Kv1.8/KCNA10 sub-subfamily. As to quaternary structure, homotetramer. Interacts with KCN4B/POMP. Interaction with KCN4B/POMP is necessary for the modulation of channel activity by cAMP. As to expression, detected in kidney, in proximal tubules, glomerular endothelium, in vascular endothelium and in smooth muscle cells.

The protein resides in the membrane. The enzyme catalyses K(+)(in) = K(+)(out). With respect to regulation, the channel activity is up-regulated by cAMP. Its function is as follows. Voltage-gated potassium ion channel that mediates K(+) permeability of excitable membranes. When opened in response to the voltage difference across the membrane, KCNA10 channel selectively allows the flow of potassium ions across the membrane down their electrochemical gradient. In Homo sapiens (Human), this protein is Potassium voltage-gated channel subfamily A member 10.